Consider the following 108-residue polypeptide: uncharacterized protein (108 aa).

This is an uncharacterized protein from Archaeoglobus fulgidus (strain ATCC 49558 / DSM 4304 / JCM 9628 / NBRC 100126 / VC-16).